Reading from the N-terminus, the 116-residue chain is Iron-sulfur cluster insertion protein ErpA (116 aa).

Cys-44, Cys-108, and Cys-110 together coordinate iron-sulfur cluster.

Belongs to the HesB/IscA family. In terms of assembly, homodimer. Iron-sulfur cluster is required as a cofactor.

Required for insertion of 4Fe-4S clusters for at least IspG. This Nitrosococcus oceani (strain ATCC 19707 / BCRC 17464 / JCM 30415 / NCIMB 11848 / C-107) protein is Iron-sulfur cluster insertion protein ErpA.